A 340-amino-acid polypeptide reads, in one-letter code: MIRLENVSVDFPAGKDAQSRAVNNVNLTIQQGEVFGIVGTSGAGKSTLLRTINLLQRPTEGRVFLGDTLISDASGRELRQHRQRIGMIFQHFNLMHTRNVYDNVAFSLRAAGKSKEEIASRVPEILALVGLQDKEASYPAQLSGGQKQRVGIARAIANHPEVLLCDEPTSALDLETSASILALLKSINVRLGITIVLISHEMSVIKSICQRMAVMTGGNIVEEGEVFTIFSAPQHAYTKQLVSHTTPIELPERFKQNNKGVLLKILFADDSVEQPILSDVAQRFQVSVNILHGNIEYINDRALGHIIAQISYRDDPAAENLAAAITYIRQNTFGVEVIND.

In terms of domain architecture, ABC transporter spans Ile2 to Val242. An ATP-binding site is contributed by Gly39–Ser46.

This sequence belongs to the ABC transporter superfamily. Methionine importer (TC 3.A.1.24) family. In terms of assembly, the complex is composed of two ATP-binding proteins (MetN), two transmembrane proteins (MetI) and a solute-binding protein (MetQ).

The protein resides in the cell inner membrane. It carries out the reaction L-methionine(out) + ATP + H2O = L-methionine(in) + ADP + phosphate + H(+). It catalyses the reaction D-methionine(out) + ATP + H2O = D-methionine(in) + ADP + phosphate + H(+). Functionally, part of the ABC transporter complex MetNIQ involved in methionine import. Responsible for energy coupling to the transport system. The sequence is that of Methionine import ATP-binding protein MetN 1 from Pectobacterium atrosepticum (strain SCRI 1043 / ATCC BAA-672) (Erwinia carotovora subsp. atroseptica).